The chain runs to 196 residues: Large ribosomal subunit protein uL6 (196 aa).

It belongs to the universal ribosomal protein uL6 family. In terms of assembly, part of the 50S ribosomal subunit.

Its function is as follows. This protein binds to the 23S rRNA, and is important in its secondary structure. It is located near the subunit interface in the base of the L7/L12 stalk, and near the tRNA binding site of the peptidyltransferase center. The polypeptide is Large ribosomal subunit protein uL6 (Archaeoglobus fulgidus (strain ATCC 49558 / DSM 4304 / JCM 9628 / NBRC 100126 / VC-16)).